The primary structure comprises 35 residues: Photosystem II reaction center protein M (35 aa).

An N-formylmethionine modification is found at Met1. Residues 7–28 (GFIASILFVLVPTVFLLILFIQ) traverse the membrane as a helical segment.

Belongs to the PsbM family. In terms of assembly, PSII is composed of 1 copy each of membrane proteins PsbA, PsbB, PsbC, PsbD, PsbE, PsbF, PsbH, PsbI, PsbJ, PsbK, PsbL, PsbM, PsbT, PsbX, PsbY, PsbZ, Psb30/Ycf12, peripheral proteins PsbO, CyanoQ (PsbQ), PsbU, PsbV and a large number of cofactors. It forms dimeric complexes.

The protein resides in the cellular thylakoid membrane. One of the components of the core complex of photosystem II (PSII). PSII is a light-driven water:plastoquinone oxidoreductase that uses light energy to abstract electrons from H(2)O, generating O(2) and a proton gradient subsequently used for ATP formation. It consists of a core antenna complex that captures photons, and an electron transfer chain that converts photonic excitation into a charge separation. This subunit is found at the monomer-monomer interface. Involved in assembly of monomeric PSII from the CP43-less intermediate. This is Photosystem II reaction center protein M from Synechocystis sp. (strain ATCC 27184 / PCC 6803 / Kazusa).